Here is a 121-residue protein sequence, read N- to C-terminus: MSFYESVFIIRQDVSLNDIDKIVDDFAKIIKDNNGTIIKKEYWGLRTLAYKIGNNKKGHYYFLGLDITGNVKEELERKMKLNENIIRFLTIQADSISSEPSPILKNQSTENAPVIDVTINN.

It belongs to the bacterial ribosomal protein bS6 family.

Functionally, binds together with bS18 to 16S ribosomal RNA. The chain is Small ribosomal subunit protein bS6 from Rickettsia peacockii (strain Rustic).